A 113-amino-acid chain; its full sequence is Ig heavy chain V-III region A4 (113 aa).

Residues 1–113 enclose the Ig-like domain; sequence EVKLEESGGG…YWGQGTLVTV (113 aa). Cys22 and Cys98 form a disulfide bridge.

This is Ig heavy chain V-III region A4 from Mus musculus (Mouse).